A 419-amino-acid chain; its full sequence is UDP-N-acetylglucosamine 1-carboxyvinyltransferase (419 aa).

22-23 (KN) lines the phosphoenolpyruvate pocket. A UDP-N-acetyl-alpha-D-glucosamine-binding site is contributed by arginine 92. Cysteine 116 acts as the Proton donor in catalysis. Cysteine 116 bears the 2-(S-cysteinyl)pyruvic acid O-phosphothioketal mark. Residues 121-125 (RPIDL), aspartate 307, and leucine 329 each bind UDP-N-acetyl-alpha-D-glucosamine.

The protein belongs to the EPSP synthase family. MurA subfamily.

It localises to the cytoplasm. The enzyme catalyses phosphoenolpyruvate + UDP-N-acetyl-alpha-D-glucosamine = UDP-N-acetyl-3-O-(1-carboxyvinyl)-alpha-D-glucosamine + phosphate. The protein operates within cell wall biogenesis; peptidoglycan biosynthesis. In terms of biological role, cell wall formation. Adds enolpyruvyl to UDP-N-acetylglucosamine. This Campylobacter fetus subsp. fetus (strain 82-40) protein is UDP-N-acetylglucosamine 1-carboxyvinyltransferase.